We begin with the raw amino-acid sequence, 338 residues long: NAD kinase (338 aa).

Asp66 acts as the Proton acceptor in catalysis. NAD(+) contacts are provided by residues 66–67 (DG), Arg71, 141–142 (ND), Lys152, Asp171, 182–187 (TAYAFS), and Ala206. Residues 317–338 (GDAGVAGTEPDKPGERDGKAGA) are disordered. Over residues 325 to 338 (EPDKPGERDGKAGA) the composition is skewed to basic and acidic residues.

This sequence belongs to the NAD kinase family. The cofactor is a divalent metal cation.

It localises to the cytoplasm. The enzyme catalyses NAD(+) + ATP = ADP + NADP(+) + H(+). Involved in the regulation of the intracellular balance of NAD and NADP, and is a key enzyme in the biosynthesis of NADP. Catalyzes specifically the phosphorylation on 2'-hydroxyl of the adenosine moiety of NAD to yield NADP. This chain is NAD kinase, found in Bifidobacterium longum subsp. infantis (strain ATCC 15697 / DSM 20088 / JCM 1222 / NCTC 11817 / S12).